A 310-amino-acid polypeptide reads, in one-letter code: Methionyl-tRNA formyltransferase (310 aa).

111-114 is a binding site for (6S)-5,6,7,8-tetrahydrofolate; sequence SLLP.

This sequence belongs to the Fmt family.

The catalysed reaction is L-methionyl-tRNA(fMet) + (6R)-10-formyltetrahydrofolate = N-formyl-L-methionyl-tRNA(fMet) + (6S)-5,6,7,8-tetrahydrofolate + H(+). Functionally, attaches a formyl group to the free amino group of methionyl-tRNA(fMet). The formyl group appears to play a dual role in the initiator identity of N-formylmethionyl-tRNA by promoting its recognition by IF2 and preventing the misappropriation of this tRNA by the elongation apparatus. In Nitrobacter hamburgensis (strain DSM 10229 / NCIMB 13809 / X14), this protein is Methionyl-tRNA formyltransferase.